The following is a 160-amino-acid chain: 6,7-dimethyl-8-ribityllumazine synthase (160 aa).

Residues tryptophan 31, serine 65–glutamate 67, and cysteine 89–valine 91 each bind 5-amino-6-(D-ribitylamino)uracil. Aspartate 94–threonine 95 is a (2S)-2-hydroxy-3-oxobutyl phosphate binding site. Histidine 97 (proton donor) is an active-site residue. A 5-amino-6-(D-ribitylamino)uracil-binding site is contributed by phenylalanine 122. (2S)-2-hydroxy-3-oxobutyl phosphate is bound at residue arginine 136.

It belongs to the DMRL synthase family.

The enzyme catalyses (2S)-2-hydroxy-3-oxobutyl phosphate + 5-amino-6-(D-ribitylamino)uracil = 6,7-dimethyl-8-(1-D-ribityl)lumazine + phosphate + 2 H2O + H(+). It functions in the pathway cofactor biosynthesis; riboflavin biosynthesis; riboflavin from 2-hydroxy-3-oxobutyl phosphate and 5-amino-6-(D-ribitylamino)uracil: step 1/2. Functionally, catalyzes the formation of 6,7-dimethyl-8-ribityllumazine by condensation of 5-amino-6-(D-ribitylamino)uracil with 3,4-dihydroxy-2-butanone 4-phosphate. This is the penultimate step in the biosynthesis of riboflavin. The chain is 6,7-dimethyl-8-ribityllumazine synthase from Parabacteroides distasonis (strain ATCC 8503 / DSM 20701 / CIP 104284 / JCM 5825 / NCTC 11152).